Consider the following 377-residue polypeptide: MSIRPWRHIERRKSRKIMVGNVAVGGDAPISVQTMTNTPTVDAQATIAQIKRCEAVGVDLIRVSCPDKESTAALKDIVRAAEVPIIADIHFHYKRALEAADAGAACLRINPGNIGSSERVAEVVRAAKANGCAIRIGVNAGSLEKELLEKYGEPCPDALVESALNHIKLLQDQDFHEFKVAVKASDVFLAVASYKALAKAVDCPLHLGITEAGGLIGGTVKSALGIGNLLWDGIGDTLRVSLSADPEQEVRVGYDILKTLDLRTRGVRVVSCPSCARQGFDVVKTVKALEERLAHIATPISLSILGCVVNGPGEARETDIGVTGGGQGKHMVFLSGVTDHTVEDAKMLDHIVSLVEAKAAEIEAEKAKEKAATVAAE.

[4Fe-4S] cluster contacts are provided by cysteine 272, cysteine 275, cysteine 307, and glutamate 314.

Belongs to the IspG family. [4Fe-4S] cluster serves as cofactor.

The enzyme catalyses (2E)-4-hydroxy-3-methylbut-2-enyl diphosphate + oxidized [flavodoxin] + H2O + 2 H(+) = 2-C-methyl-D-erythritol 2,4-cyclic diphosphate + reduced [flavodoxin]. It functions in the pathway isoprenoid biosynthesis; isopentenyl diphosphate biosynthesis via DXP pathway; isopentenyl diphosphate from 1-deoxy-D-xylulose 5-phosphate: step 5/6. In terms of biological role, converts 2C-methyl-D-erythritol 2,4-cyclodiphosphate (ME-2,4cPP) into 1-hydroxy-2-methyl-2-(E)-butenyl 4-diphosphate. This is 4-hydroxy-3-methylbut-2-en-1-yl diphosphate synthase (flavodoxin) from Zymomonas mobilis subsp. mobilis (strain ATCC 31821 / ZM4 / CP4).